The sequence spans 143 residues: uncharacterized protein (143 aa).

A signal peptide spans methionine 1 to alanine 16. The helical transmembrane segment at glycine 114–glycine 134 threads the bilayer.

The protein resides in the membrane. This is an uncharacterized protein from Mycobacterium tuberculosis (strain CDC 1551 / Oshkosh).